We begin with the raw amino-acid sequence, 119 residues long: Autophagy-related protein 8h (119 aa).

Residue Gly119 is the site of Phosphatidylethanolamine amidated glycine attachment.

This sequence belongs to the ATG8 family. As to quaternary structure, interacts with ATG4. Interacts with ATI1. Post-translationally, gly-119 forms then a thioester bond with the 'Cys-558' of ATG7 (E1-like activating enzyme) before being transferred to the 'Cys-258' of ATG3 (the specific E2 conjugating enzyme), in order to be finally amidated with phosphatidylethanolamine. This lipid modification anchors ATG8 to autophagosomes. Constitutively expressed.

Its subcellular location is the cytoplasmic vesicle. The protein localises to the autophagosome membrane. It localises to the vacuole membrane. The protein resides in the cytoplasm. It is found in the cytoskeleton. Ubiquitin-like modifier involved in autophagosomes formation. May mediate the delivery of the autophagosomes to the vacuole via the microtubule cytoskeleton. The sequence is that of Autophagy-related protein 8h (ATG8H) from Arabidopsis thaliana (Mouse-ear cress).